We begin with the raw amino-acid sequence, 119 residues long: Large ribosomal subunit protein uL18 (119 aa).

The protein belongs to the universal ribosomal protein uL18 family. As to quaternary structure, part of the 50S ribosomal subunit; part of the 5S rRNA/L5/L18/L25 subcomplex. Contacts the 5S and 23S rRNAs.

This is one of the proteins that bind and probably mediate the attachment of the 5S RNA into the large ribosomal subunit, where it forms part of the central protuberance. In Xanthomonas axonopodis pv. citri (strain 306), this protein is Large ribosomal subunit protein uL18.